The following is a 269-amino-acid chain: Indole-3-glycerol phosphate synthase (269 aa).

It belongs to the TrpC family.

It carries out the reaction 1-(2-carboxyphenylamino)-1-deoxy-D-ribulose 5-phosphate + H(+) = (1S,2R)-1-C-(indol-3-yl)glycerol 3-phosphate + CO2 + H2O. The protein operates within amino-acid biosynthesis; L-tryptophan biosynthesis; L-tryptophan from chorismate: step 4/5. This Roseiflexus sp. (strain RS-1) protein is Indole-3-glycerol phosphate synthase.